The chain runs to 716 residues: Astellifadiene synthase (716 aa).

The terpene cyclase stretch occupies residues M1–F323. Residue D92 coordinates Mg(2+). Residues D92, R179–D182, N223, S227–E231, and R316–Y317 each bind substrate. The DDXXD 1 motif lies at D92–D96. The NSE/DTE signature appears at N223–E231. The interval S324–L713 is prenyltransferase. Residues K436, R439, and H468 each contribute to the isopentenyl diphosphate site. Mg(2+) is bound by residues D475 and D479. The short motif at D475 to D479 is the DDXXD 2 element. R484 contacts dimethylallyl diphosphate. R485 is an isopentenyl diphosphate binding site. Residues K562, T563, Q598, N605, K615, and K625 each contribute to the dimethylallyl diphosphate site.

The protein in the N-terminal section; belongs to the terpene synthase family. It in the C-terminal section; belongs to the FPP/GGPP synthase family. As to quaternary structure, hexamer. The cofactor is Mg(2+).

It catalyses the reaction isopentenyl diphosphate + (2E,6E)-farnesyl diphosphate = (2E,6E,10E)-geranylgeranyl diphosphate + diphosphate. It carries out the reaction isopentenyl diphosphate + (2E,6E,10E)-geranylgeranyl diphosphate = (2E,6E,10E,14E)-geranylfarnesyl diphosphate + diphosphate. The enzyme catalyses (2E,6E,10E,14E)-geranylfarnesyl diphosphate = astellifadiene + diphosphate. Its pathway is secondary metabolite biosynthesis; terpenoid biosynthesis. Bifunctional terpene synthase that converts dimethylallyl diphosphate (DMAPP) and isopentenyl diphosphate (IPP) into astellifadiene. The C-terminal prenyltransferase (PT) domain of EvAS catalyzes formation of geranylfarnesyl pyrophosphate (GFPP), whereas the N-terminal terpene cyclase (TC) domain catalyzes the cyclization of GFPP to astellifadiene. The polypeptide is Astellifadiene synthase (Emericella variicolor (Aspergillus stellatus)).